We begin with the raw amino-acid sequence, 77 residues long: MPKLSAAELRQLSGEELRNKVRELKEELFGLRFQSATGQLENTARLREVRKDIARVYTVLQERNLNIVDDPDSTKEA.

It belongs to the universal ribosomal protein uL29 family.

The sequence is that of Large ribosomal subunit protein uL29 from Cutibacterium acnes (strain DSM 16379 / KPA171202) (Propionibacterium acnes).